A 295-amino-acid polypeptide reads, in one-letter code: Sulfotransferase 1A1 (295 aa).

48 to 53 (KSGTTW) serves as a coordination point for 3'-phosphoadenylyl sulfate. Residue 106–108 (KTH) participates in substrate binding. Residue histidine 108 is the Proton acceptor of the active site. 3'-phosphoadenylyl sulfate-binding positions include arginine 130, serine 138, tyrosine 193, 227–232 (TSFKEM), and 255–259 (FMRKG). Serine 138 carries the post-translational modification Phosphoserine.

This sequence belongs to the sulfotransferase 1 family. In terms of assembly, homodimer. In terms of tissue distribution, distal lung parenchyma.

The protein resides in the cytoplasm. The enzyme catalyses a phenol + 3'-phosphoadenylyl sulfate = an aryl sulfate + adenosine 3',5'-bisphosphate + H(+). It catalyses the reaction 17beta-estradiol + 3'-phosphoadenylyl sulfate = 17beta-estradiol 3-sulfate + adenosine 3',5'-bisphosphate + H(+). It carries out the reaction 4-ethylphenol + 3'-phosphoadenylyl sulfate = 4-ethylphenyl sulfate + adenosine 3',5'-bisphosphate + H(+). The catalysed reaction is 4-nitrophenol + 3'-phosphoadenylyl sulfate = 4-nitrophenyl sulfate + adenosine 3',5'-bisphosphate. The enzyme catalyses dopamine + 3'-phosphoadenylyl sulfate = dopamine 3-O-sulfate + adenosine 3',5'-bisphosphate + H(+). It catalyses the reaction dopamine + 3'-phosphoadenylyl sulfate = dopamine 4-O-sulfate + adenosine 3',5'-bisphosphate + H(+). It carries out the reaction 3,3',5-triiodo-L-thyronine + 3'-phosphoadenylyl sulfate = 3,3',5-triiodo-L-thyronine sulfate + adenosine 3',5'-bisphosphate + H(+). The catalysed reaction is 3,3',5'-triiodo-L-thyronine + 3'-phosphoadenylyl sulfate = 3,3',5'-triiodo-L-thyronine sulfate + adenosine 3',5'-bisphosphate + H(+). The enzyme catalyses 3,3'-diiodo-L-thyronine + 3'-phosphoadenylyl sulfate = 3,3'-diiodo-L-thyronine sulfate + adenosine 3',5'-bisphosphate + H(+). It catalyses the reaction L-thyroxine + 3'-phosphoadenylyl sulfate = L-thyroxine sulfate + adenosine 3',5'-bisphosphate + H(+). Sulfotransferase that utilizes 3'-phospho-5'-adenylyl sulfate (PAPS) as sulfonate donor to catalyze the sulfate conjugation of a wide variety of acceptor molecules bearing a hydroxyl or an amine group. Sulfonation increases the water solubility of most compounds, and therefore their renal excretion, but it can also result in bioactivation to form active metabolites. Displays broad substrate specificity for small phenolic compounds. Plays an important role in the sulfonation of endogenous molecules such as steroid hormones. Mediates also the metabolic activation of carcinogenic N-hydroxyarylamines leading to highly reactive intermediates capable of forming DNA adducts, potentially resulting in mutagenesis. May play a role in gut microbiota-host metabolic interaction. O-sulfonates 4-ethylphenol (4-EP), a dietary tyrosine-derived metabolite produced by gut bacteria. The product 4-EPS crosses the blood-brain barrier and may negatively regulate oligodendrocyte maturation and myelination, affecting the functional connectivity of different brain regions associated with the limbic system. Catalyzes the sulfate conjugation of dopamine. Catalyzes the sulfation of T4 (L-thyroxine/3,5,3',5'-tetraiodothyronine), T3 (3,5,3'-triiodothyronine), rT3 (3,3',5'-triiodothyronine) and 3,3'-T2 (3,3'-diiodothyronine), with a substrate preference of 3,3'-T2 &gt; rT3 &gt; T3 &gt; T4. The sequence is that of Sulfotransferase 1A1 (SULT1A1) from Bos taurus (Bovine).